Here is a 344-residue protein sequence, read N- to C-terminus: HTH-type transcriptional regulator MalR (344 aa).

The region spanning 1–54 (MTTRLADIAAQAGVSEATVSRVLNGKPGVAATTRQSVLAALDVLGYERPVRLRQ) is the HTH lacI-type domain. The H-T-H motif DNA-binding region spans 5 to 24 (LADIAAQAGVSEATVSRVLN).

Transcriptional repressor of the maltosaccharide utilization operon malEFG. The polypeptide is HTH-type transcriptional regulator MalR (malR) (Streptomyces coelicolor (strain ATCC BAA-471 / A3(2) / M145)).